A 335-amino-acid polypeptide reads, in one-letter code: Phosphatidate cytidylyltransferase, mitochondrial (335 aa).

It belongs to the TAM41 family. The cofactor is Mg(2+).

It is found in the mitochondrion inner membrane. The enzyme catalyses a 1,2-diacyl-sn-glycero-3-phosphate + CTP + H(+) = a CDP-1,2-diacyl-sn-glycerol + diphosphate. It participates in phospholipid metabolism; CDP-diacylglycerol biosynthesis; CDP-diacylglycerol from sn-glycerol 3-phosphate: step 3/3. Its function is as follows. Catalyzes the conversion of phosphatidic acid (PA) to CDP-diacylglycerol (CDP-DAG), an essential intermediate in the synthesis of phosphatidylglycerol, cardiolipin and phosphatidylinositol. The sequence is that of Phosphatidate cytidylyltransferase, mitochondrial (TAMM41) from Bos taurus (Bovine).